Here is a 206-residue protein sequence, read N- to C-terminus: Cytochrome c oxidase assembly protein CtaG (206 aa).

The Cytoplasmic segment spans residues 1–17 (MPEVQPSALPKPAPRLG). The chain crosses the membrane as a helical; Signal-anchor for type II membrane protein span at residues 18-40 (RDAAVASICGFVVALMVGASFAA). Topologically, residues 41 to 206 (VPFYDWFCRT…GEPDQRKGNL (166 aa)) are periplasmic.

It belongs to the COX11/CtaG family.

The protein localises to the cell inner membrane. Its function is as follows. Exerts its effect at some terminal stage of cytochrome c oxidase synthesis, probably by being involved in the insertion of the copper B into subunit I. The protein is Cytochrome c oxidase assembly protein CtaG of Rhodopseudomonas palustris (strain BisB5).